A 387-amino-acid polypeptide reads, in one-letter code: Putative transposase y4pF/y4sB (387 aa).

This sequence belongs to the transposase 20 family.

The polypeptide is Putative transposase y4pF/y4sB (Sinorhizobium fredii (strain NBRC 101917 / NGR234)).